The chain runs to 388 residues: S-adenosylmethionine synthase (388 aa).

His16 is an ATP binding site. Asp18 contacts Mg(2+). Residue Glu44 participates in K(+) binding. Residues Glu57 and Gln100 each coordinate L-methionine. Residues 100-110 (QSADIAQGVNE) are flexible loop. ATP contacts are provided by residues 167-169 (DAK), 233-234 (RF), Asp242, 248-249 (RK), Ala265, and Lys269. Residue Asp242 participates in L-methionine binding. Residue Lys273 coordinates L-methionine.

Belongs to the AdoMet synthase family. As to quaternary structure, homotetramer; dimer of dimers. It depends on Mg(2+) as a cofactor. K(+) serves as cofactor.

The protein localises to the cytoplasm. The catalysed reaction is L-methionine + ATP + H2O = S-adenosyl-L-methionine + phosphate + diphosphate. It functions in the pathway amino-acid biosynthesis; S-adenosyl-L-methionine biosynthesis; S-adenosyl-L-methionine from L-methionine: step 1/1. Catalyzes the formation of S-adenosylmethionine (AdoMet) from methionine and ATP. The overall synthetic reaction is composed of two sequential steps, AdoMet formation and the subsequent tripolyphosphate hydrolysis which occurs prior to release of AdoMet from the enzyme. The sequence is that of S-adenosylmethionine synthase from Aromatoleum aromaticum (strain DSM 19018 / LMG 30748 / EbN1) (Azoarcus sp. (strain EbN1)).